The primary structure comprises 288 residues: 4-hydroxybenzoate octaprenyltransferase (288 aa).

The next 8 helical transmembrane spans lie at 23–43, 46–66, 98–118, 141–161, 163–183, 213–233, 234–254, and 268–288; these read IGSL…GRGI, AKIL…GCVV, ILFV…NSMT, LPQV…FAAV, ESLP…TVAY, LIIG…GWLM, NLGG…THQQ, and AFLN…ISYW.

This sequence belongs to the UbiA prenyltransferase family. Mg(2+) is required as a cofactor.

The protein resides in the cell inner membrane. The enzyme catalyses all-trans-octaprenyl diphosphate + 4-hydroxybenzoate = 4-hydroxy-3-(all-trans-octaprenyl)benzoate + diphosphate. Its pathway is cofactor biosynthesis; ubiquinone biosynthesis. In terms of biological role, catalyzes the prenylation of para-hydroxybenzoate (PHB) with an all-trans polyprenyl group. Mediates the second step in the final reaction sequence of ubiquinone-8 (UQ-8) biosynthesis, which is the condensation of the polyisoprenoid side chain with PHB, generating the first membrane-bound Q intermediate 3-octaprenyl-4-hydroxybenzoate. This chain is 4-hydroxybenzoate octaprenyltransferase, found in Yersinia pseudotuberculosis serotype IB (strain PB1/+).